A 218-amino-acid polypeptide reads, in one-letter code: Protein-lysine N-methyltransferase M142.8 (218 aa).

It belongs to the class I-like SAM-binding methyltransferase superfamily. EFM5 family.

The protein localises to the cytoplasm. S-adenosyl-L-methionine-dependent protein-lysine N-methyltransferase that methylates elongation factor 1-alpha. The sequence is that of Protein-lysine N-methyltransferase M142.8 from Caenorhabditis elegans.